The sequence spans 279 residues: Sulfur carrier protein FdhD (279 aa).

The active-site Cysteine persulfide intermediate is Cys112.

It belongs to the FdhD family.

It is found in the cytoplasm. Functionally, required for formate dehydrogenase (FDH) activity. Acts as a sulfur carrier protein that transfers sulfur from IscS to the molybdenum cofactor prior to its insertion into FDH. This chain is Sulfur carrier protein FdhD, found in Nocardia farcinica (strain IFM 10152).